The sequence spans 176 residues: Dynein light chain Tctex-type 5-B (176 aa).

This sequence belongs to the dynein light chain Tctex-type family.

This is Dynein light chain Tctex-type 5-B (Dynlt5-b) from Xenopus laevis (African clawed frog).